Here is an 88-residue protein sequence, read N- to C-terminus: Parvalbumin beta 3 (88 aa).

Alanine 1 is modified (N-acetylalanine). The EF-hand domain occupies 31–66 (KSPEEVKKFFAIIDQDHSGFIEEEELKLFLQTFSAG). Ca(2+)-binding residues include aspartate 44, aspartate 46, serine 48, phenylalanine 50, glutamate 52, glutamate 55, and glutamate 81.

It belongs to the parvalbumin family.

In terms of biological role, in muscle, parvalbumin is thought to be involved in relaxation after contraction. It binds two calcium ions. The protein is Parvalbumin beta 3 of Merluccius productus (North Pacific hake).